Here is a 445-residue protein sequence, read N- to C-terminus: Methionine aminopeptidase 2 (445 aa).

The disordered stretch occupies residues 1 to 80 (MAAQVASGVG…TSKVQTEPPR (80 aa)). Over residues 57 to 71 (AKKKKKKTKKKKKGT) the composition is skewed to basic residues. A substrate-binding site is contributed by His-195. The a divalent metal cation site is built by Asp-215, Asp-226, and His-295. His-303 contacts substrate. A divalent metal cation is bound by residues Glu-331 and Glu-426.

The protein belongs to the peptidase M24A family. Methionine aminopeptidase eukaryotic type 2 subfamily. It depends on Co(2+) as a cofactor. Requires Zn(2+) as cofactor. Mn(2+) serves as cofactor. Fe(2+) is required as a cofactor.

It localises to the cytoplasm. The enzyme catalyses Release of N-terminal amino acids, preferentially methionine, from peptides and arylamides.. In terms of biological role, cotranslationally removes the N-terminal methionine from nascent proteins. The N-terminal methionine is often cleaved when the second residue in the primary sequence is small and uncharged (Met-Ala-, Cys, Gly, Pro, Ser, Thr, or Val). The protein is Methionine aminopeptidase 2 of Paracoccidioides brasiliensis (strain Pb18).